The sequence spans 631 residues: Golgin subfamily A member 8R (631 aa).

The segment at 1 to 72 (MAEETQHNKL…REGPTSSATL (72 aa)) is disordered. Residues 38–50 (TNGSIPETATSGG) are compositionally biased toward polar residues. Coiled-coil stretches lie at residues 85-149 (VLDS…NTDL), 209-247 (ELEQ…HIEG), and 303-419 (SEVE…LSLM). 3 disordered regions span residues 422–451 (PGEG…DPES), 502–523 (AKDA…DEGE), and 551–610 (NSAD…QEHP). Residues 507-519 (LGGGHHQAGAQGG) show a composition bias toward gly residues. A compositionally biased stretch (basic and acidic residues) spans 568-577 (AADKHGDLRE).

The protein belongs to the GOLGA8 family.

This Homo sapiens (Human) protein is Golgin subfamily A member 8R.